The chain runs to 281 residues: Apolipoprotein E (281 aa).

Positions 1-18 (MKVLWAALLIALLAGCQG) are cleaved as a signal peptide. 5 repeat units span residues 82–103 (ALMDETMKELKAYKSELEEQLS), 104–125 (PVAEETRARLSKELQAAQARLG), 126–147 (ADMEDVRSRLAQYRSEVQAMLG), 148–169 (QSTDELRARLTSHLRKLRTVSY), and 198–219 (TRMEEVGSRTRDRLDEVKEQVE). The 5 X 22 AA approximate tandem repeats stretch occupies residues 82–219 (ALMDETMKEL…RLDEVKEQVE (138 aa)). Met-145 carries the methionine sulfoxide modification. Ser-149 carries the post-translational modification Phosphoserine. The interval 160–170 (HLRKLRTVSYT) is LDL and other lipoprotein receptors binding. Residues 164-167 (LRTV) and 193-200 (GERLRTRM) contribute to the heparin site. Residues 230-281 (QQMRLQAEAFQARLKSWFEPLVEDMQRQWAGLVEKVQAAVGASAAPVPSDNH) are homooligomerization. A specificity for association with VLDL region spans residues 242–254 (RLKSWFEPLVEDM).

It belongs to the apolipoprotein A1/A4/E family. In terms of assembly, homotetramer. May interact with ABCA1; functionally associated with ABCA1 in the biogenesis of HDLs. May interact with APP/A4 amyloid-beta peptide; the interaction is extremely stable in vitro but its physiological significance is unclear. May interact with MAPT. May interact with MAP2. In the cerebrospinal fluid, interacts with secreted SORL1. Interacts with PMEL; this allows the loading of PMEL luminal fragment on ILVs to induce fibril nucleation. APOE exists as multiple glycosylated and sialylated glycoforms within cells and in plasma. The extent of glycosylation and sialylation are tissue and context specific. In terms of processing, glycated in plasma VLDL. Post-translationally, phosphorylated by FAM20C in the extracellular medium.

Its subcellular location is the secreted. It localises to the extracellular space. It is found in the extracellular matrix. The protein resides in the extracellular vesicle. The protein localises to the endosome. Its subcellular location is the multivesicular body. APOE is an apolipoprotein, a protein associating with lipid particles, that mainly functions in lipoprotein-mediated lipid transport between organs via the plasma and interstitial fluids. APOE is a core component of plasma lipoproteins and is involved in their production, conversion and clearance. Apolipoproteins are amphipathic molecules that interact both with lipids of the lipoprotein particle core and the aqueous environment of the plasma. As such, APOE associates with chylomicrons, chylomicron remnants, very low density lipoproteins (VLDL) and intermediate density lipoproteins (IDL) but shows a preferential binding to high-density lipoproteins (HDL). It also binds a wide range of cellular receptors including the LDL receptor/LDLR, the LDL receptor-related proteins LRP1, LRP2 and LRP8 and the very low-density lipoprotein receptor/VLDLR that mediate the cellular uptake of the APOE-containing lipoprotein particles. Finally, APOE also has a heparin-binding activity and binds heparan-sulfate proteoglycans on the surface of cells, a property that supports the capture and the receptor-mediated uptake of APOE-containing lipoproteins by cells. A main function of APOE is to mediate lipoprotein clearance through the uptake of chylomicrons, VLDLs, and HDLs by hepatocytes. APOE is also involved in the biosynthesis by the liver of VLDLs as well as their uptake by peripheral tissues ensuring the delivery of triglycerides and energy storage in muscle, heart and adipose tissues. By participating in the lipoprotein-mediated distribution of lipids among tissues, APOE plays a critical role in plasma and tissues lipid homeostasis. APOE is also involved in two steps of reverse cholesterol transport, the HDLs-mediated transport of cholesterol from peripheral tissues to the liver, and thereby plays an important role in cholesterol homeostasis. First, it is functionally associated with ABCA1 in the biogenesis of HDLs in tissues. Second, it is enriched in circulating HDLs and mediates their uptake by hepatocytes. APOE also plays an important role in lipid transport in the central nervous system, regulating neuron survival and sprouting. The chain is Apolipoprotein E (APOE) from Aotus nancymaae (Ma's night monkey).